We begin with the raw amino-acid sequence, 350 residues long: C4-dicarboxylate-binding protein DctB (350 aa).

Residues 1–18 form the signal peptide; sequence MKSLLACLALMIAGIATA.

This sequence belongs to the bacterial solute-binding protein 7 family.

It is found in the secreted. Functionally, part of the binding-protein-dependent transport system for uptake of C4-dicarboxylates. Responsible for growth on fumarate and succinate but not malate. Is not directly involved in C4-dicarboxylate uptake, but plays a sensory role in the DctS/DctR two-component system which regulates the expression of the dctA C4-dicarboxylate transporter. The sequence is that of C4-dicarboxylate-binding protein DctB (dctB) from Bacillus subtilis (strain 168).